Consider the following 103-residue polypeptide: Large ribosomal subunit protein bL21 (103 aa).

This sequence belongs to the bacterial ribosomal protein bL21 family. Part of the 50S ribosomal subunit. Contacts protein L20.

Its function is as follows. This protein binds to 23S rRNA in the presence of protein L20. The sequence is that of Large ribosomal subunit protein bL21 from Bordetella parapertussis (strain 12822 / ATCC BAA-587 / NCTC 13253).